A 322-amino-acid polypeptide reads, in one-letter code: Pantothenate kinase (322 aa).

100–107 (GSVAVGKS) lines the ATP pocket.

It belongs to the prokaryotic pantothenate kinase family.

It is found in the cytoplasm. The catalysed reaction is (R)-pantothenate + ATP = (R)-4'-phosphopantothenate + ADP + H(+). The protein operates within cofactor biosynthesis; coenzyme A biosynthesis; CoA from (R)-pantothenate: step 1/5. This chain is Pantothenate kinase, found in Agrobacterium fabrum (strain C58 / ATCC 33970) (Agrobacterium tumefaciens (strain C58)).